The following is a 101-amino-acid chain: Antiviral protein CAP (101 aa).

Has antiviral activity against tobacco mosaic virus and antitumor activity. This chain is Antiviral protein CAP, found in Coprinus comatus (Shaggy mane).